We begin with the raw amino-acid sequence, 900 residues long: Alanine--tRNA ligase (900 aa).

Zn(2+) is bound by residues histidine 580, histidine 584, cysteine 683, and histidine 687.

This sequence belongs to the class-II aminoacyl-tRNA synthetase family. Requires Zn(2+) as cofactor.

It localises to the cytoplasm. The catalysed reaction is tRNA(Ala) + L-alanine + ATP = L-alanyl-tRNA(Ala) + AMP + diphosphate. Functionally, catalyzes the attachment of alanine to tRNA(Ala) in a two-step reaction: alanine is first activated by ATP to form Ala-AMP and then transferred to the acceptor end of tRNA(Ala). Also edits incorrectly charged Ser-tRNA(Ala) and Gly-tRNA(Ala) via its editing domain. The protein is Alanine--tRNA ligase of Mycolicibacterium paratuberculosis (strain ATCC BAA-968 / K-10) (Mycobacterium paratuberculosis).